A 531-amino-acid polypeptide reads, in one-letter code: Probable cytochrome P450 4e1 (531 aa).

Glu-307 and Cys-444 together coordinate heme.

It belongs to the cytochrome P450 family. It depends on heme as a cofactor.

The protein resides in the endoplasmic reticulum membrane. Its subcellular location is the microsome membrane. Its function is as follows. May be involved in the metabolism of insect hormones and in the breakdown of synthetic insecticides. The protein is Probable cytochrome P450 4e1 (Cyp4e1) of Drosophila melanogaster (Fruit fly).